The primary structure comprises 324 residues: Glyoxylate/hydroxypyruvate reductase B (324 aa).

Residues R237 and E266 contribute to the active site. H285 functions as the Proton donor in the catalytic mechanism.

This sequence belongs to the D-isomer specific 2-hydroxyacid dehydrogenase family. GhrB subfamily. Homodimer.

It localises to the cytoplasm. It catalyses the reaction glycolate + NADP(+) = glyoxylate + NADPH + H(+). The enzyme catalyses (R)-glycerate + NAD(+) = 3-hydroxypyruvate + NADH + H(+). The catalysed reaction is (R)-glycerate + NADP(+) = 3-hydroxypyruvate + NADPH + H(+). Catalyzes the NADPH-dependent reduction of glyoxylate and hydroxypyruvate into glycolate and glycerate, respectively. The polypeptide is Glyoxylate/hydroxypyruvate reductase B (Salmonella gallinarum (strain 287/91 / NCTC 13346)).